A 229-amino-acid polypeptide reads, in one-letter code: V-type proton ATPase subunit E (229 aa).

Belongs to the V-ATPase E subunit family. As to quaternary structure, V-ATPase is a heteromultimeric enzyme composed of a peripheral catalytic V1 complex (components A to H) attached to an integral membrane V0 proton pore complex (components: a, c, c', c'' and d).

Its function is as follows. Subunit of the peripheral V1 complex of vacuolar ATPase essential for assembly or catalytic function. V-ATPase is responsible for acidifying a variety of intracellular compartments in eukaryotic cells. The chain is V-type proton ATPase subunit E (VATE) from Spinacia oleracea (Spinach).